Here is a 110-residue protein sequence, read N- to C-terminus: Small ubiquitin-related modifier 3 (110 aa).

Glycyl lysine isopeptide (Lys-Gly) (interchain with G-Cter in SUMO2) cross-links involve residues Lys-5 and Lys-7. Residue Lys-11 forms a Glycyl lysine isopeptide (Lys-Gly) (interchain with G-Cter in SUMO); alternate linkage. Lys-11 is covalently cross-linked (Glycyl lysine isopeptide (Lys-Gly) (interchain with G-Cter in SUMO2); alternate). In terms of domain architecture, Ubiquitin-like spans 15 to 92 (DHINLKVAGQ…IDVFQQQTGG (78 aa)). Over residues 89-101 (QTGGTASRASVPT) the composition is skewed to polar residues. The tract at residues 89–110 (QTGGTASRASVPTPSHFPDICY) is disordered. Gly-92 participates in a covalent cross-link: Glycyl lysine isopeptide (Gly-Lys) (interchain with K-? in acceptor proteins). Positions 93–110 (TASRASVPTPSHFPDICY) are excised as a propeptide.

It belongs to the ubiquitin family. SUMO subfamily. In terms of assembly, interacts with SAE2 and UBE2I. Covalently attached to a number of proteins. Interacts with USP25 (via ts SIM domain); the interaction sumoylates USP25 and inhibits its ubiquitin hydrolyzing activity. Interacts with BMAL1. Post-translationally, polymeric chains can be formed through Lys-11 cross-linking. Cleavage of precursor form by SENP1, SENP2 or SENP5 is necessary for function.

The protein localises to the cytoplasm. It is found in the nucleus. Its subcellular location is the PML body. In terms of biological role, ubiquitin-like protein which can be covalently attached to target lysines either as a monomer or as a lysine-linked polymer. Does not seem to be involved in protein degradation and may function as an antagonist of ubiquitin in the degradation process. Plays a role in a number of cellular processes such as nuclear transport, DNA replication and repair, mitosis and signal transduction. Covalent attachment to its substrates requires prior activation by the E1 complex SAE1-SAE2 and linkage to the E2 enzyme UBE2I, and can be promoted by an E3 ligase such as PIAS1-4, RANBP2 or CBX4. Plays a role in the regulation of sumoylation status of SETX. The protein is Small ubiquitin-related modifier 3 (Sumo3) of Rattus norvegicus (Rat).